The sequence spans 124 residues: Small ribosomal subunit protein uS12 (124 aa).

Residues Met1–Gly32 form a disordered region. At Asp89 the chain carries 3-methylthioaspartic acid.

It belongs to the universal ribosomal protein uS12 family. In terms of assembly, part of the 30S ribosomal subunit. Contacts proteins S8 and S17. May interact with IF1 in the 30S initiation complex.

With S4 and S5 plays an important role in translational accuracy. Functionally, interacts with and stabilizes bases of the 16S rRNA that are involved in tRNA selection in the A site and with the mRNA backbone. Located at the interface of the 30S and 50S subunits, it traverses the body of the 30S subunit contacting proteins on the other side and probably holding the rRNA structure together. The combined cluster of proteins S8, S12 and S17 appears to hold together the shoulder and platform of the 30S subunit. In Nocardioides sp. (strain ATCC BAA-499 / JS614), this protein is Small ribosomal subunit protein uS12.